The chain runs to 348 residues: Phenylalanine--tRNA ligase alpha subunit (348 aa).

A Mg(2+)-binding site is contributed by Glu-262.

It belongs to the class-II aminoacyl-tRNA synthetase family. Phe-tRNA synthetase alpha subunit type 1 subfamily. As to quaternary structure, tetramer of two alpha and two beta subunits. The cofactor is Mg(2+).

It localises to the cytoplasm. It catalyses the reaction tRNA(Phe) + L-phenylalanine + ATP = L-phenylalanyl-tRNA(Phe) + AMP + diphosphate + H(+). In Streptococcus pneumoniae (strain JJA), this protein is Phenylalanine--tRNA ligase alpha subunit.